The following is a 284-amino-acid chain: Bifunctional protein FolD (284 aa).

NADP(+) contacts are provided by residues 166 to 168 and Ile-232; that span reads GAS.

Belongs to the tetrahydrofolate dehydrogenase/cyclohydrolase family. As to quaternary structure, homodimer.

The enzyme catalyses (6R)-5,10-methylene-5,6,7,8-tetrahydrofolate + NADP(+) = (6R)-5,10-methenyltetrahydrofolate + NADPH. It carries out the reaction (6R)-5,10-methenyltetrahydrofolate + H2O = (6R)-10-formyltetrahydrofolate + H(+). It functions in the pathway one-carbon metabolism; tetrahydrofolate interconversion. Catalyzes the oxidation of 5,10-methylenetetrahydrofolate to 5,10-methenyltetrahydrofolate and then the hydrolysis of 5,10-methenyltetrahydrofolate to 10-formyltetrahydrofolate. This is Bifunctional protein FolD from Shewanella baltica (strain OS223).